The primary structure comprises 326 residues: Phospho-N-acetylmuramoyl-pentapeptide-transferase (326 aa).

Helical transmembrane passes span I3 to I23, T51 to F71, V79 to L99, L115 to I135, V138 to V158, G169 to A189, M195 to N215, V221 to H243, and F306 to M326.

It belongs to the glycosyltransferase 4 family. MraY subfamily. Requires Mg(2+) as cofactor.

The protein localises to the cell membrane. It carries out the reaction UDP-N-acetyl-alpha-D-muramoyl-L-alanyl-gamma-D-glutamyl-L-lysyl-D-alanyl-D-alanine + di-trans,octa-cis-undecaprenyl phosphate = Mur2Ac(oyl-L-Ala-gamma-D-Glu-L-Lys-D-Ala-D-Ala)-di-trans,octa-cis-undecaprenyl diphosphate + UMP. It functions in the pathway cell wall biogenesis; peptidoglycan biosynthesis. Catalyzes the initial step of the lipid cycle reactions in the biosynthesis of the cell wall peptidoglycan: transfers peptidoglycan precursor phospho-MurNAc-pentapeptide from UDP-MurNAc-pentapeptide onto the lipid carrier undecaprenyl phosphate, yielding undecaprenyl-pyrophosphoryl-MurNAc-pentapeptide, known as lipid I. In Streptococcus pneumoniae serotype 19F (strain G54), this protein is Phospho-N-acetylmuramoyl-pentapeptide-transferase.